Consider the following 1142-residue polypeptide: ABC transporter F family member 4 (1142 aa).

The disordered stretch occupies residues 1–564 (MGPKGKKKGQ…EDAFELAKKK (564 aa)). Composition is skewed to low complexity over residues 121-143 (PQPV…QQQQ), 153-166 (PQPV…APQK), and 182-195 (PQPV…APQK). 2 stretches are compositionally biased toward acidic residues: residues 203–212 (SEDEDEEDEV) and 233–244 (EEEEEEEEEEIE). 2 stretches are compositionally biased toward basic residues: residues 249–261 (KGGK…KGGK) and 280–290 (KGGKKDKKKGS). A compositionally biased stretch (acidic residues) spans 295–306 (EEEEEEEEEEIE). Residues 314–328 (NKKDQKKGGKGKHVE) are compositionally biased toward basic and acidic residues. Residues 329 to 340 (EEEEEEEEEEIE) are compositionally biased toward acidic residues. Residues 377–387 (KGGKKDKKKGS) show a composition bias toward basic residues. Acidic residues-rich tracts occupy residues 392 to 404 (EEEE…EEIE) and 441 to 451 (EEEEQEQEEEE). The span at 456–467 (SKSNKKDKKKGK) shows a compositional bias: basic residues. A compositionally biased stretch (acidic residues) spans 471–480 (EEEEEEEEEE). A compositionally biased stretch (basic residues) spans 485 to 496 (SKSNKKDKKKGS). The span at 501–518 (EEEEEEEEEEEEEKEEEE) shows a compositional bias: acidic residues. A compositionally biased stretch (basic residues) spans 530 to 548 (AKKVKKVDKKEKKKEKEKK). ABC transporter domains are found at residues 604 to 857 (IKFD…RSKE) and 923 to 1139 (LVFK…DNMV). ATP contacts are provided by residues 636–643 (GRNGIGKS) and 956–963 (GMNGVGKS).

Belongs to the ABC transporter superfamily.

This is ABC transporter F family member 4 (abcF4) from Dictyostelium discoideum (Social amoeba).